An 818-amino-acid chain; its full sequence is Dipeptidyl aminopeptidase B (818 aa).

Residues 1–29 (MEGGEEEVERIPDELFDTKKKHLLDKLIR) are Cytoplasmic-facing. Residues 30–45 (VGIILVLLIWGTVLLL) form a helical; Signal-anchor for type II membrane protein membrane-spanning segment. Topologically, residues 46–818 (KSIPHHSNTP…KRAFDGQFVK (773 aa)) are lumenal. Residues asparagine 63, asparagine 79, asparagine 110, asparagine 139, asparagine 372, asparagine 392, and asparagine 421 are each glycosylated (N-linked (GlcNAc...) asparagine). The active-site Charge relay system is serine 679. N-linked (GlcNAc...) asparagine glycosylation occurs at asparagine 738. Residues aspartate 756 and histidine 789 each act as charge relay system in the active site.

The protein belongs to the peptidase S9B family.

It localises to the vacuole membrane. The polypeptide is Dipeptidyl aminopeptidase B (DAP2) (Saccharomyces cerevisiae (strain ATCC 204508 / S288c) (Baker's yeast)).